Reading from the N-terminus, the 435-residue chain is 5-methylthioadenosine/S-adenosylhomocysteine deaminase (435 aa).

Zn(2+) is bound by residues His-65 and His-67. Substrate contacts are provided by Glu-94, Arg-150, and His-189. Residue His-216 coordinates Zn(2+). The substrate site is built by Glu-219 and Asp-304. Asp-304 provides a ligand contact to Zn(2+).

Belongs to the metallo-dependent hydrolases superfamily. MTA/SAH deaminase family. Zn(2+) is required as a cofactor.

The catalysed reaction is S-adenosyl-L-homocysteine + H2O + H(+) = S-inosyl-L-homocysteine + NH4(+). The enzyme catalyses S-methyl-5'-thioadenosine + H2O + H(+) = S-methyl-5'-thioinosine + NH4(+). Functionally, catalyzes the deamination of 5-methylthioadenosine and S-adenosyl-L-homocysteine into 5-methylthioinosine and S-inosyl-L-homocysteine, respectively. Is also able to deaminate adenosine. In Bacillus cytotoxicus (strain DSM 22905 / CIP 110041 / 391-98 / NVH 391-98), this protein is 5-methylthioadenosine/S-adenosylhomocysteine deaminase.